The sequence spans 922 residues: Probable outer membrane protein pmp1 (922 aa).

The first 26 residues, 1–26 (MRFSLCGFPLVFSFTLLSVFDTSLSA), serve as a signal peptide directing secretion. The Autotransporter domain maps to 620-922 (SLQTDRGLWI…NINCGSKFRF (303 aa)).

It belongs to the PMP outer membrane protein family.

The protein localises to the secreted. The protein resides in the cell wall. It localises to the cell outer membrane. In Chlamydia pneumoniae (Chlamydophila pneumoniae), this protein is Probable outer membrane protein pmp1 (pmp1).